Reading from the N-terminus, the 432-residue chain is Tol-Pal system protein TolB (432 aa).

Positions 1–24 are cleaved as a signal peptide; that stretch reads MKLVTRMWSILIVFFLAVLQPAQA.

Belongs to the TolB family. As to quaternary structure, the Tol-Pal system is composed of five core proteins: the inner membrane proteins TolA, TolQ and TolR, the periplasmic protein TolB and the outer membrane protein Pal. They form a network linking the inner and outer membranes and the peptidoglycan layer.

The protein resides in the periplasm. In terms of biological role, part of the Tol-Pal system, which plays a role in outer membrane invagination during cell division and is important for maintaining outer membrane integrity. This is Tol-Pal system protein TolB from Pasteurella multocida (strain Pm70).